Reading from the N-terminus, the 218-residue chain is Riboflavin synthase (218 aa).

Lumazine-binding repeat units lie at residues 1–97 (MFTG…FGGH) and 98–194 (IVSG…ERLL). 2,4-dihydroxypteridine-binding positions include 4 to 6 (GII), 48 to 50 (CLT), 62 to 67 (DLSIET), 101 to 103 (GHV), Lys136, 145 to 147 (SLT), and 159 to 164 (TIVPHT).

In terms of assembly, homotrimer.

The enzyme catalyses 2 6,7-dimethyl-8-(1-D-ribityl)lumazine + H(+) = 5-amino-6-(D-ribitylamino)uracil + riboflavin. Its pathway is cofactor biosynthesis; riboflavin biosynthesis; riboflavin from 2-hydroxy-3-oxobutyl phosphate and 5-amino-6-(D-ribitylamino)uracil: step 2/2. In terms of biological role, catalyzes the dismutation of two molecules of 6,7-dimethyl-8-ribityllumazine, resulting in the formation of riboflavin and 5-amino-6-(D-ribitylamino)uracil. This is Riboflavin synthase from Photobacterium phosphoreum.